We begin with the raw amino-acid sequence, 623 residues long: DNA mismatch repair protein MutL (623 aa).

Residues 353-368 (AQQSAPRPANSYSPAS) are compositionally biased toward polar residues. A disordered region spans residues 353-389 (AQQSAPRPANSYSPASWRTAPPAPRSEWSPQTAHPAH).

The protein belongs to the DNA mismatch repair MutL/HexB family.

Functionally, this protein is involved in the repair of mismatches in DNA. It is required for dam-dependent methyl-directed DNA mismatch repair. May act as a 'molecular matchmaker', a protein that promotes the formation of a stable complex between two or more DNA-binding proteins in an ATP-dependent manner without itself being part of a final effector complex. The chain is DNA mismatch repair protein MutL from Brucella melitensis biotype 1 (strain ATCC 23456 / CCUG 17765 / NCTC 10094 / 16M).